An 809-amino-acid chain; its full sequence is uncharacterized protein (809 aa).

The MHYT domain occupies 19–206 (HDLRLVLVAS…FTGMSAITIV (188 aa)). The next 7 membrane-spanning stretches (helical) occupy residues 23-43 (LVLV…RLYS), 57-77 (LLLT…IAMV), 92-112 (TLLS…VASA), 122-142 (GGVL…SAFV), 152-172 (ATVG…LLLA), 186-206 (GMLC…ITIV), and 224-244 (TLAV…AVAI). Positions 254–317 (ERIRRLANAA…ADPSREDVRR (64 aa)) constitute a PAS domain. Residues 402–536 (ESLAVICIDL…GRGVYRFFKR (135 aa)) enclose the GGDEF domain. The 251-residue stretch at 545–795 (RRNLARDLRQ…ALTMWTTAGD (251 aa)) folds into the EAL domain.

The protein localises to the cell membrane. This is an uncharacterized protein from Caulobacter vibrioides (strain ATCC 19089 / CIP 103742 / CB 15) (Caulobacter crescentus).